We begin with the raw amino-acid sequence, 340 residues long: GTP 3',8-cyclase (340 aa).

Residues 20 to 246 (RFERQYVYLR…PKALSDGPAK (227 aa)) form the Radical SAM core domain. Arg29 provides a ligand contact to GTP. The [4Fe-4S] cluster site is built by Cys36 and Cys40. Tyr42 lines the S-adenosyl-L-methionine pocket. Cys43 is a [4Fe-4S] cluster binding site. Arg79 contributes to the GTP binding site. Gly83 contacts S-adenosyl-L-methionine. Thr110 is a GTP binding site. S-adenosyl-L-methionine is bound at residue Ser134. Position 171 (Lys171) interacts with GTP. Residue Met205 participates in S-adenosyl-L-methionine binding. Cys268 and Cys271 together coordinate [4Fe-4S] cluster. Position 273–275 (273–275 (RLR)) interacts with GTP. Cys285 provides a ligand contact to [4Fe-4S] cluster.

Belongs to the radical SAM superfamily. MoaA family. As to quaternary structure, monomer and homodimer. The cofactor is [4Fe-4S] cluster.

The catalysed reaction is GTP + AH2 + S-adenosyl-L-methionine = (8S)-3',8-cyclo-7,8-dihydroguanosine 5'-triphosphate + 5'-deoxyadenosine + L-methionine + A + H(+). It functions in the pathway cofactor biosynthesis; molybdopterin biosynthesis. Catalyzes the cyclization of GTP to (8S)-3',8-cyclo-7,8-dihydroguanosine 5'-triphosphate. The polypeptide is GTP 3',8-cyclase (Actinobacillus pleuropneumoniae serotype 5b (strain L20)).